Consider the following 506-residue polypeptide: Probable Xaa-Pro aminopeptidase BDBG_08406 (506 aa).

Residues Asp285, Asp296, Glu433, and Glu471 each contribute to the Mn(2+) site.

It belongs to the peptidase M24B family. Requires Mn(2+) as cofactor.

The catalysed reaction is Release of any N-terminal amino acid, including proline, that is linked to proline, even from a dipeptide or tripeptide.. Catalyzes the removal of a penultimate prolyl residue from the N-termini of peptides. In Blastomyces gilchristii (strain SLH14081) (Blastomyces dermatitidis), this protein is Probable Xaa-Pro aminopeptidase BDBG_08406.